Here is a 277-residue protein sequence, read N- to C-terminus: 4-hydroxy-tetrahydrodipicolinate reductase (277 aa).

Residues 11–16 (GALGRM) and 110–112 (GTT) each bind NAD(+). The active-site Proton donor/acceptor is His-166. A (S)-2,3,4,5-tetrahydrodipicolinate-binding site is contributed by His-167. Lys-170 functions as the Proton donor in the catalytic mechanism. 176 to 177 (GT) provides a ligand contact to (S)-2,3,4,5-tetrahydrodipicolinate.

This sequence belongs to the DapB family.

The protein resides in the cytoplasm. It catalyses the reaction (S)-2,3,4,5-tetrahydrodipicolinate + NAD(+) + H2O = (2S,4S)-4-hydroxy-2,3,4,5-tetrahydrodipicolinate + NADH + H(+). The catalysed reaction is (S)-2,3,4,5-tetrahydrodipicolinate + NADP(+) + H2O = (2S,4S)-4-hydroxy-2,3,4,5-tetrahydrodipicolinate + NADPH + H(+). It functions in the pathway amino-acid biosynthesis; L-lysine biosynthesis via DAP pathway; (S)-tetrahydrodipicolinate from L-aspartate: step 4/4. Its function is as follows. Catalyzes the conversion of 4-hydroxy-tetrahydrodipicolinate (HTPA) to tetrahydrodipicolinate. The chain is 4-hydroxy-tetrahydrodipicolinate reductase from Synechococcus sp. (strain CC9605).